The chain runs to 293 residues: Diaminopimelate epimerase (293 aa).

The substrate site is built by Asn15, Gln47, and Asn67. The active-site Proton donor is the Cys76. Substrate-binding positions include 77–78, Asn163, Asn197, and 215–216; these read GN and ER. Cys224 acts as the Proton acceptor in catalysis. 225-226 is a substrate binding site; sequence GS.

This sequence belongs to the diaminopimelate epimerase family. As to quaternary structure, homodimer.

It localises to the cytoplasm. It catalyses the reaction (2S,6S)-2,6-diaminopimelate = meso-2,6-diaminopimelate. Its pathway is amino-acid biosynthesis; L-lysine biosynthesis via DAP pathway; DL-2,6-diaminopimelate from LL-2,6-diaminopimelate: step 1/1. Functionally, catalyzes the stereoinversion of LL-2,6-diaminopimelate (L,L-DAP) to meso-diaminopimelate (meso-DAP), a precursor of L-lysine and an essential component of the bacterial peptidoglycan. The chain is Diaminopimelate epimerase from Chelativorans sp. (strain BNC1).